The following is a 1256-amino-acid chain: Centrosome and spindle pole-associated protein 1 (1256 aa).

Coiled coils occupy residues 38–62 and 114–135; these read ADNLDEFIEEQKARLAEDKAELESD and EDYERKKHKLKEELRQDYRRYL. A compositionally biased stretch (basic and acidic residues) spans 189-208; it reads GKEESSEKFRQVEKSTEPKS. Disordered regions lie at residues 189-244 and 381-403; these read GKEE…LTPS and AENKSAPDNETSKSANQDTCSPF. Polar residues predominate over residues 222–232; the sequence is LTSQIQTSCEN. Ser-244 carries the phosphoserine modification. Positions 244-270 form a coiled coil; the sequence is SEAYEELLNQRRLEEDRYRQLDDEIEL. The stretch at 417–449 forms a coiled coil; sequence QRRKEKYRLELLEQMAEQQRNKRREKDLELRVA. A phosphoserine mark is found at Ser-459 and Ser-527. Residues 625–669 adopt a coiled-coil conformation; that stretch reads SKQSLQSYQEALQQQIREREERRKKEREEKEEYEAKLEAEMRTYN. Disordered regions lie at residues 735-757 and 813-853; these read ANKSSGHMQTQSSPFARGNVFGE and EYEE…KKEE. Residues 736 to 748 are compositionally biased toward polar residues; the sequence is NKSSGHMQTQSSP. Residues Ser-901 and Ser-920 each carry the phosphoserine modification. The tract at residues 913–932 is disordered; sequence SSMSRAQSPPVPARKNQLRA. A coiled-coil region spans residues 925–964; the sequence is ARKNQLRAEEEKKNVIMELSEMRKQLRSEERRLQERLLHM. The residue at position 966 (Ser-966) is a Phosphoserine. 2 disordered regions span residues 1114–1147 and 1232–1256; these read EDDVLPPPSQLPSARERRRNKWKGLDIDSSRPNV and LNQEQQQIPGKPGTFTWQGLSTAHG. A compositionally biased stretch (polar residues) spans 1246-1256; the sequence is FTWQGLSTAHG.

Interacts with PLEKHG6. Interacts with ARMC9, TOGARAM1, CCDC66, CEP104 and CEP290. Phosphorylated. Phosphorylation increases in colcemide-treated cells. Expressed in adult and fetal brain with enrichment in the cerebellum. Detected in testis.

The protein localises to the cytoplasm. It is found in the cytoskeleton. The protein resides in the microtubule organizing center. It localises to the centrosome. Its subcellular location is the spindle. The protein localises to the spindle pole. It is found in the cell projection. The protein resides in the cilium. Functionally, may play a role in cell-cycle-dependent microtubule organization. This chain is Centrosome and spindle pole-associated protein 1 (CSPP1), found in Homo sapiens (Human).